The primary structure comprises 202 residues: Small ribosomal subunit protein uS2 (202 aa).

Belongs to the universal ribosomal protein uS2 family.

In Methanocorpusculum labreanum (strain ATCC 43576 / DSM 4855 / Z), this protein is Small ribosomal subunit protein uS2.